The following is a 297-amino-acid chain: N-acetylmuramic acid 6-phosphate etherase (297 aa).

One can recognise an SIS domain in the interval 56-219 (AIEAFNKGGR…STISMIGIGK (164 aa)). The active-site Proton donor is the glutamate 84. Residue glutamate 115 is part of the active site.

This sequence belongs to the GCKR-like family. MurNAc-6-P etherase subfamily. Homodimer.

The catalysed reaction is N-acetyl-D-muramate 6-phosphate + H2O = N-acetyl-D-glucosamine 6-phosphate + (R)-lactate. Its pathway is amino-sugar metabolism; N-acetylmuramate degradation. In terms of biological role, specifically catalyzes the cleavage of the D-lactyl ether substituent of MurNAc 6-phosphate, producing GlcNAc 6-phosphate and D-lactate. This is N-acetylmuramic acid 6-phosphate etherase from Lactococcus lactis subsp. cremoris (strain SK11).